A 225-amino-acid chain; its full sequence is Cold-regulated 413 inner membrane protein 1, chloroplastic (225 aa).

Residues 1 to 76 (MASLCLSSSR…RKRGSSVVCY (76 aa)) constitute a chloroplast transit peptide. Residue A77 is a topological domain, stromal. The helical transmembrane segment at 78–98 (APISANSLQWISTISCLALML) threads the bilayer. Topologically, residues 99–102 (ARGT) are chloroplast intermembrane. A helical transmembrane segment spans residues 103 to 123 (GIHKSVVVPLFALHAPSSIVA). The Stromal portion of the chain corresponds to 124–128 (WIKGE). Residues 129 to 149 (YGVWAAFLALIARLFFTFPGE) form a helical membrane-spanning segment. Over 150–151 (LE) the chain is Chloroplast intermembrane. The chain crosses the membrane as a helical span at residues 152 to 172 (LPFIALLLVIVAPYQVMNIRG). Residues 173–175 (KQE) are Stromal-facing. A helical transmembrane segment spans residues 176 to 196 (GAIIAIAISGFLAFQHFSRAG). The Chloroplast intermembrane segment spans residues 197–204 (SLEKAYEK). A helical membrane pass occupies residues 205-225 (GSVLATVAIIGVTVVSLLLLL).

Belongs to the Cold-regulated 413 protein family.

The protein resides in the plastid. It is found in the chloroplast inner membrane. The protein is Cold-regulated 413 inner membrane protein 1, chloroplastic (COR413IM1) of Arabidopsis thaliana (Mouse-ear cress).